The chain runs to 327 residues: uncharacterized protein (327 aa).

Positions 12–31 are disordered; the sequence is PLGTTKSYHMNTSTVSPPSP. The next 2 helical transmembrane spans lie at 183–203 and 292–312; these read VSSPSVEVYIAGCCGGVPVIL and VGVGIGLGMCLGVGIGVGLLM.

It localises to the membrane. This is an uncharacterized protein from Arabidopsis thaliana (Mouse-ear cress).